Here is a 197-residue protein sequence, read N- to C-terminus: UPF0725 protein At5g41640 (197 aa).

Belongs to the UPF0725 (EMB2204) family.

The chain is UPF0725 protein At5g41640 from Arabidopsis thaliana (Mouse-ear cress).